We begin with the raw amino-acid sequence, 223 residues long: MOB kinase activator-like 4 (223 aa).

Residues 1 to 21 (MKMADGSTILRRNRPGTKSKD) form a disordered region. Zn(2+) is bound by residues cysteine 92, cysteine 97, histidine 169, and histidine 174.

Belongs to the MOB1/phocein family.

The polypeptide is MOB kinase activator-like 4 (Mob4) (Drosophila melanogaster (Fruit fly)).